A 778-amino-acid chain; its full sequence is Dolichyl-phosphate-mannose--protein mannosyltransferase 4 (778 aa).

Positions 1 to 28 are enriched in basic and acidic residues; it reads MASKSEKAVKKAQKLSKEPSVELTDTKS. Residues 1 to 44 form a disordered region; it reads MASKSEKAVKKAQKLSKEPSVELTDTKSSDNVTPKQKSPNSTEE. A compositionally biased stretch (polar residues) spans 29–41; the sequence is SDNVTPKQKSPNS. An N-linked (GlcNAc...) asparagine glycan is attached at Asn40. A run of 7 helical transmembrane segments spans residues 60 to 80, 103 to 123, 145 to 165, 196 to 216, 223 to 243, 248 to 268, and 288 to 308; these read LAFV…LNLP, FFDL…KLAG, VTIR…VFLI, ILLD…YVRF, PFSR…SCTI, VGFF…WYLW, and FCLI…HFNI. Residue Asn335 is glycosylated (N-linked (GlcNAc...) asparagine). MIR domains are found at residues 336–396, 408–467, and 474–529; these read STIL…ILPA, NVPV…VVMS, and RPLY…FDDI. Helical transmembrane passes span 608-628, 644-664, 669-689, and 726-746; these read WWII…EILL, FYRS…PFFI, LFLH…GAFI, and VIEL…FTFF.

It belongs to the glycosyltransferase 39 family.

The protein resides in the endoplasmic reticulum membrane. The catalysed reaction is a di-trans,poly-cis-dolichyl beta-D-mannosyl phosphate + L-seryl-[protein] = 3-O-(alpha-D-mannosyl)-L-seryl-[protein] + a di-trans,poly-cis-dolichyl phosphate + H(+). It catalyses the reaction a di-trans,poly-cis-dolichyl beta-D-mannosyl phosphate + L-threonyl-[protein] = 3-O-(alpha-D-mannosyl)-L-threonyl-[protein] + a di-trans,poly-cis-dolichyl phosphate + H(+). It participates in protein modification; protein glycosylation. Transfers mannose from Dol-P-mannose to Ser or Thr residues on proteins. Required for normal cell wall and septum formation. The sequence is that of Dolichyl-phosphate-mannose--protein mannosyltransferase 4 (ogm4) from Schizosaccharomyces pombe (strain 972 / ATCC 24843) (Fission yeast).